The sequence spans 163 residues: Ribonuclease P protein component (163 aa).

The disordered stretch occupies residues 1–68; that stretch reads MDEKDVATQP…GGKLLSLKGD (68 aa). Polar residues predominate over residues 8-19; that stretch reads TQPQETGQNPRL.

It belongs to the RnpA family. In terms of assembly, consists of a catalytic RNA component (M1 or rnpB) and a protein subunit.

The enzyme catalyses Endonucleolytic cleavage of RNA, removing 5'-extranucleotides from tRNA precursor.. RNaseP catalyzes the removal of the 5'-leader sequence from pre-tRNA to produce the mature 5'-terminus. It can also cleave other RNA substrates such as 4.5S RNA. The protein component plays an auxiliary but essential role in vivo by binding to the 5'-leader sequence and broadening the substrate specificity of the ribozyme. This Thermus thermophilus (strain ATCC BAA-163 / DSM 7039 / HB27) protein is Ribonuclease P protein component.